A 658-amino-acid chain; its full sequence is DNA mismatch repair protein MutL (658 aa).

Over residues 114–130 (RQEDSSHATQVKAEDGK) the composition is skewed to basic and acidic residues. 2 disordered regions span residues 114 to 138 (RQEDSSHATQVKAEDGKLSSPTAAA) and 353 to 405 (PMPS…HSLS). Polar residues predominate over residues 361–372 (ENLFDSASNHPT).

It belongs to the DNA mismatch repair MutL/HexB family.

This protein is involved in the repair of mismatches in DNA. It is required for dam-dependent methyl-directed DNA mismatch repair. May act as a 'molecular matchmaker', a protein that promotes the formation of a stable complex between two or more DNA-binding proteins in an ATP-dependent manner without itself being part of a final effector complex. This Neisseria gonorrhoeae (strain NCCP11945) protein is DNA mismatch repair protein MutL.